The chain runs to 329 residues: tRNA N6-adenosine threonylcarbamoyltransferase (329 aa).

His-110 and His-114 together coordinate Fe cation. Substrate is bound by residues 132–136 (VISGG), Asp-165, Gly-178, and Asn-271. Asp-299 provides a ligand contact to Fe cation.

This sequence belongs to the KAE1 / TsaD family. It depends on Fe(2+) as a cofactor.

The protein resides in the cytoplasm. The catalysed reaction is L-threonylcarbamoyladenylate + adenosine(37) in tRNA = N(6)-L-threonylcarbamoyladenosine(37) in tRNA + AMP + H(+). Functionally, required for the formation of a threonylcarbamoyl group on adenosine at position 37 (t(6)A37) in tRNAs that read codons beginning with adenine. Is involved in the transfer of the threonylcarbamoyl moiety of threonylcarbamoyl-AMP (TC-AMP) to the N6 group of A37, together with TsaE and TsaB. TsaD likely plays a direct catalytic role in this reaction. The chain is tRNA N6-adenosine threonylcarbamoyltransferase from Neorickettsia sennetsu (strain ATCC VR-367 / Miyayama) (Ehrlichia sennetsu).